The sequence spans 434 residues: Methylenetetrahydrofolate--tRNA-(uracil-5-)-methyltransferase TrmFO (434 aa).

9–14 (GAGLAG) contacts FAD.

Belongs to the MnmG family. TrmFO subfamily. Requires FAD as cofactor.

The protein resides in the cytoplasm. It catalyses the reaction uridine(54) in tRNA + (6R)-5,10-methylene-5,6,7,8-tetrahydrofolate + NADH + H(+) = 5-methyluridine(54) in tRNA + (6S)-5,6,7,8-tetrahydrofolate + NAD(+). The catalysed reaction is uridine(54) in tRNA + (6R)-5,10-methylene-5,6,7,8-tetrahydrofolate + NADPH + H(+) = 5-methyluridine(54) in tRNA + (6S)-5,6,7,8-tetrahydrofolate + NADP(+). Its function is as follows. Catalyzes the folate-dependent formation of 5-methyl-uridine at position 54 (M-5-U54) in all tRNAs. In Bacillus licheniformis (strain ATCC 14580 / DSM 13 / JCM 2505 / CCUG 7422 / NBRC 12200 / NCIMB 9375 / NCTC 10341 / NRRL NRS-1264 / Gibson 46), this protein is Methylenetetrahydrofolate--tRNA-(uracil-5-)-methyltransferase TrmFO.